We begin with the raw amino-acid sequence, 254 residues long: Thiazole synthase (254 aa).

Lys-95 acts as the Schiff-base intermediate with DXP in catalysis. Residues Gly-156, 182 to 183 (AG), and 204 to 205 (NT) each bind 1-deoxy-D-xylulose 5-phosphate.

This sequence belongs to the ThiG family. In terms of assembly, homotetramer. Forms heterodimers with either ThiH or ThiS.

The protein localises to the cytoplasm. It catalyses the reaction [ThiS sulfur-carrier protein]-C-terminal-Gly-aminoethanethioate + 2-iminoacetate + 1-deoxy-D-xylulose 5-phosphate = [ThiS sulfur-carrier protein]-C-terminal Gly-Gly + 2-[(2R,5Z)-2-carboxy-4-methylthiazol-5(2H)-ylidene]ethyl phosphate + 2 H2O + H(+). The protein operates within cofactor biosynthesis; thiamine diphosphate biosynthesis. Its function is as follows. Catalyzes the rearrangement of 1-deoxy-D-xylulose 5-phosphate (DXP) to produce the thiazole phosphate moiety of thiamine. Sulfur is provided by the thiocarboxylate moiety of the carrier protein ThiS. In vitro, sulfur can be provided by H(2)S. In Shewanella putrefaciens (strain CN-32 / ATCC BAA-453), this protein is Thiazole synthase.